A 492-amino-acid polypeptide reads, in one-letter code: MKKAILSVSNKSGIVEFAKALTNLDYELYSTGGTKRVLEDANINIKSVSELTQFPEIMDGRVKTLHPAVHGGILADRDKEHHLEQLREQHIDLIDMVVVNLYPFQQTVAQPDVTETDAVENIDIGGPTMLRAAAKNFKHVTTIVHPSDYNEVIERIKNHQLDEAYRKSLMVKVFQHTNEYDHAIVNYFKDNKETLRYGENPQQSAYFVRTSDSKHTIAGAKQLHGKQLSFNNIKDADAALSLVKKFNEPTAVAVKHMNPCGVGIGQSIDEAFQHAYEADNQSIFGGIIALNRTVDVKLAEALHSIFLEVVIAPQFTEEALKILTQKKNIRLLQIDMTIDNAEQEFVSVSGGYLVQDKDNKDVTRNDMTVATDTQPTEAQWEAMLLGWKVVSAVKSNAVILSNNKQTVGIGAGQMNRVGSAKIAIERAIEINDNVALVSDGFFPMGDTVEYAAEHGIKAIIQPGGSIKDQDSIDMANKYGITMVMTGMRHFKH.

An MGS-like domain is found at 1 to 144 (MKKAILSVSN…KNFKHVTTIV (144 aa)).

Belongs to the PurH family.

It catalyses the reaction (6R)-10-formyltetrahydrofolate + 5-amino-1-(5-phospho-beta-D-ribosyl)imidazole-4-carboxamide = 5-formamido-1-(5-phospho-D-ribosyl)imidazole-4-carboxamide + (6S)-5,6,7,8-tetrahydrofolate. The catalysed reaction is IMP + H2O = 5-formamido-1-(5-phospho-D-ribosyl)imidazole-4-carboxamide. It participates in purine metabolism; IMP biosynthesis via de novo pathway; 5-formamido-1-(5-phospho-D-ribosyl)imidazole-4-carboxamide from 5-amino-1-(5-phospho-D-ribosyl)imidazole-4-carboxamide (10-formyl THF route): step 1/1. Its pathway is purine metabolism; IMP biosynthesis via de novo pathway; IMP from 5-formamido-1-(5-phospho-D-ribosyl)imidazole-4-carboxamide: step 1/1. This Staphylococcus epidermidis (strain ATCC 35984 / DSM 28319 / BCRC 17069 / CCUG 31568 / BM 3577 / RP62A) protein is Bifunctional purine biosynthesis protein PurH.